Here is a 393-residue protein sequence, read N- to C-terminus: Dual specificity mitogen-activated protein kinase kinase 1 (393 aa).

The disordered stretch occupies residues 1–27 (MPKKKPTPIQLNPAPDGSAVNGTSSAE). The Protein kinase domain occupies 68–361 (FEKISELGAG…LKQLMVHAFI (294 aa)). ATP-binding positions include 74 to 82 (LGAGNGGVV) and Lys97. Residue Asp190 is the Proton acceptor of the active site. Phosphoserine; by RAF is present on residues Ser218 and Ser222. Positions 270 to 307 (ELELMFGCQVEGDAAETPPRPRTPGRPLSSYGMDSRPP) are RAF1-binding. Position 286 is a phosphothreonine (Thr286). The residue at position 292 (Thr292) is a Phosphothreonine; by MAPK1. Ser298 is modified (phosphoserine; by PAK).

It belongs to the protein kinase superfamily. STE Ser/Thr protein kinase family. MAP kinase kinase subfamily. As to quaternary structure, found in a complex with at least BRAF, HRAS, MAP2K1, MAPK3/ERK1 and RGS14. Forms a heterodimer with MAP2K2/MEK2. Forms heterodimers with KSR2 which further dimerize to form tetramers. Interacts with KSR1 or KSR2 and BRAF; the interaction with KSR1 or KSR2 mediates KSR1-BRAF or KSR2-BRAF dimerization. Interacts with ARBB2, LAMTOR3, MAPK1/ERK2 and RAF1. Interacts with MAPK1/ERK2. Interacts with MORG1. Interacts with PPARG. Interacts with isoform 1 of VRK2. Interacts with SGK1. Interacts with BIRC6/bruce. Interacts with KAT7; the interaction promotes KAT7 phosphorylation. Interacts with RAF1 and NEK10; the interaction is required for ERK1/2-signaling pathway activation in response to UV irradiation. Interacts with TRAF3IP3. Interacts with MOS. Post-translationally, phosphorylation at Ser-218 and Ser-222 by MAP kinase kinase kinases (BRAF or MEKK1) positively regulates the kinase activity. Also phosphorylated at Thr-292 by MAPK1/ERK2 and at Ser-298 by PAK. MAPK1/ERK2 phosphorylation of Thr-292 occurs in response to cellular adhesion and leads to inhibition of Ser-298 phosphorylation by PAK. Autophosphorylated at Ser-218 and Ser-222, autophosphosphorylation is promoted by NEK10 following UV irradiation.

It localises to the cytoplasm. The protein resides in the cytoskeleton. The protein localises to the microtubule organizing center. Its subcellular location is the centrosome. It is found in the spindle pole body. It localises to the nucleus. The protein resides in the membrane. It carries out the reaction L-seryl-[protein] + ATP = O-phospho-L-seryl-[protein] + ADP + H(+). It catalyses the reaction L-threonyl-[protein] + ATP = O-phospho-L-threonyl-[protein] + ADP + H(+). The catalysed reaction is L-tyrosyl-[protein] + ATP = O-phospho-L-tyrosyl-[protein] + ADP + H(+). Ras proteins such as HRAS mediate the activation of RAF proteins such as RAF1 or BRAF which in turn activate extracellular signal-regulated kinases (ERK) through MAPK (mitogen-activated protein kinases) and ERK kinases MAP2K1/MEK1 and MAP2K2/MEK2. Activation occurs through phosphorylation of Ser-218 and Ser-222. MAP2K1/MEK1 binds KSR1 or KSR2 releasing the inhibitory intramolecular interaction between KSR1 or KSR2 protein kinase and N-terminal domains. This allows KSR1 or KSR2 dimerization with BRAF leading to BRAF activation and phosphorylation of MAP2K1. MAP2K1/MEK1 is also the target of negative feed-back regulation by its substrate kinases, such as MAPK1/ERK2. These phosphorylate MAP2K1/MEK1 on Thr-292, thereby facilitating dephosphorylation of the activating residues Ser-218 and Ser-222. Inhibited by serine/threonine phosphatase 2A. Functionally, dual specificity protein kinase which acts as an essential component of the MAP kinase signal transduction pathway. Binding of extracellular ligands such as growth factors, cytokines and hormones to their cell-surface receptors activates RAS and this initiates RAF1 activation. RAF1 then further activates the dual-specificity protein kinases MAP2K1/MEK1 and MAP2K2/MEK2. Both MAP2K1/MEK1 and MAP2K2/MEK2 function specifically in the MAPK/ERK cascade, and catalyze the concomitant phosphorylation of a threonine and a tyrosine residue in a Thr-Glu-Tyr sequence located in the extracellular signal-regulated kinases MAPK3/ERK1 and MAPK1/ERK2, leading to their activation and further transduction of the signal within the MAPK/ERK cascade. Activates BRAF in a KSR1 or KSR2-dependent manner; by binding to KSR1 or KSR2 releases the inhibitory intramolecular interaction between KSR1 or KSR2 protein kinase and N-terminal domains which promotes KSR1 or KSR2-BRAF dimerization and BRAF activation. Depending on the cellular context, this pathway mediates diverse biological functions such as cell growth, adhesion, survival and differentiation, predominantly through the regulation of transcription, metabolism and cytoskeletal rearrangements. One target of the MAPK/ERK cascade is peroxisome proliferator-activated receptor gamma (PPARG), a nuclear receptor that promotes differentiation and apoptosis. MAP2K1/MEK1 has been shown to export PPARG from the nucleus. The MAPK/ERK cascade is also involved in the regulation of endosomal dynamics, including lysosome processing and endosome cycling through the perinuclear recycling compartment (PNRC), as well as in the fragmentation of the Golgi apparatus during mitosis. The polypeptide is Dual specificity mitogen-activated protein kinase kinase 1 (MAP2K1) (Pan troglodytes (Chimpanzee)).